The chain runs to 148 residues: UPAR/Ly6 domain-containing protein bero (148 aa).

The N-terminal stretch at 1–23 is a signal peptide; sequence MVSALKCSLAVAVMISLACSAYA. 5 disulfides stabilise this stretch: Cys26/Cys72, Cys29/Cys37, Cys51/Cys90, Cys102/Cys116, and Cys119/Cys124. N-linked (GlcNAc...) asparagine glycosylation is present at Asn68. Residue Asn125 is glycosylated (N-linked (GlcNAc...) asparagine). The GPI-anchor amidated asparagine moiety is linked to residue Asn125. Residues 126–148 constitute a propeptide, removed in mature form; that stretch reads GSSSLAPIAGAILLFFGVARLLA. The chain crosses the membrane as a helical span at residues 128 to 148; it reads SSLAPIAGAILLFFGVARLLA.

This sequence belongs to the quiver family.

The protein localises to the cell membrane. Its subcellular location is the membrane. It is found in the perikaryon. The protein resides in the cell projection. It localises to the neuron projection. Its function is as follows. Necessary for the maintenance of persistent fluctuating activities and suppression of acute evoked activities in abdominal leucokinin-producing (ABLK) neurons to negatively regulate neuron excitability involved in nociceptive (perception of pain) behavioral responses. The polypeptide is UPAR/Ly6 domain-containing protein bero (Drosophila melanogaster (Fruit fly)).